A 265-amino-acid polypeptide reads, in one-letter code: MPYAHGGDADLYYEIHGAGTPILLSAGMGGGAGFWRPQIEALAARHQVILYDHAGTGRSGRDIGPRSITEMARDMARVLDAAGVEDAHVAGHAIGGIIGMELALAAPERVRSLTIVNGWARADGFLRRCFEVRKRILLASGPEAYVRAQPLFLYPPRWIAENIAVLEEEEAQMVAHFPGTQTMLNRIETFLAFDGRERLADIRVPTLLAAAKDDALVPSYLSTLLAEGIPDARIAEVDWGAHAFSAVTPDVFNEMLLGFCGEIDQ.

Positions 21–123 (PILLSAGMGG…TIVNGWARAD (103 aa)) constitute an AB hydrolase-1 domain.

This sequence belongs to the AB hydrolase superfamily. Hydrolase RutD family.

The catalysed reaction is carbamate + 2 H(+) = NH4(+) + CO2. Functionally, involved in pyrimidine catabolism. May facilitate the hydrolysis of carbamate, a reaction that can also occur spontaneously. The protein is Putative carbamate hydrolase RutD of Azorhizobium caulinodans (strain ATCC 43989 / DSM 5975 / JCM 20966 / LMG 6465 / NBRC 14845 / NCIMB 13405 / ORS 571).